A 411-amino-acid polypeptide reads, in one-letter code: Peptidase T (411 aa).

H79 is a binding site for Zn(2+). D81 is a catalytic residue. D142 lines the Zn(2+) pocket. The Proton acceptor role is filled by E176. Positions 177, 199, and 381 each coordinate Zn(2+).

This sequence belongs to the peptidase M20B family. Zn(2+) serves as cofactor.

It is found in the cytoplasm. The catalysed reaction is Release of the N-terminal residue from a tripeptide.. Its function is as follows. Cleaves the N-terminal amino acid of tripeptides. This Exiguobacterium sibiricum (strain DSM 17290 / CCUG 55495 / CIP 109462 / JCM 13490 / 255-15) protein is Peptidase T.